The chain runs to 367 residues: Cytochrome-c peroxidase IdrP2 (367 aa).

Positions 1 to 28 (MTTHQSIRRLSRIAALVGLAFVAGTVAA) are cleaved as a signal peptide. 2 consecutive Cytochrome c domains span residues 47 to 157 (DMVE…AMWQ) and 200 to 345 (SQQK…EALS). Residues Cys-69, Cys-72, His-73, Cys-215, Cys-218, and His-219 each coordinate heme c.

The iodate reductase (Idr) complex is composed of a molybdopterin-dependent iodate reductase (IdrA and IdrB subunits) and two associated peroxidases (IdrP1 and IdrP2). Heme c serves as cofactor.

It is found in the periplasm. It carries out the reaction 2 Fe(II)-[cytochrome c] + H2O2 + 2 H(+) = 2 Fe(III)-[cytochrome c] + 2 H2O. Functionally, involved in iodate respiration. May play a critical role in detoxification of inadvertent H(2)O(2) generated by the iodate reductase IdrA/IdrB. The sequence is that of Cytochrome-c peroxidase IdrP2 from Denitromonas iodatirespirans.